Consider the following 355-residue polypeptide: dTDP-glucose 4,6-dehydratase (355 aa).

NAD(+) contacts are provided by residues 12–13 (FI), 33–36 (DKLT), 59–60 (DI), 81–85 (LAAES), and Thr-100. Residue Ser-85 coordinates substrate. Thr-134 lines the substrate pocket. The Proton donor role is filled by Asp-135. Catalysis depends on proton acceptor residues Glu-136 and Tyr-160. 160–164 (YSASK) is a binding site for NAD(+). Asn-189 is a substrate binding site. Residue Asn-190 coordinates NAD(+). Substrate-binding positions include 199-200 (KL), 215-217 (PVY), Arg-224, Asn-259, and 293-297 (DRPGH).

Belongs to the NAD(P)-dependent epimerase/dehydratase family. dTDP-glucose dehydratase subfamily. In terms of assembly, homodimer. NAD(+) is required as a cofactor.

It catalyses the reaction dTDP-alpha-D-glucose = dTDP-4-dehydro-6-deoxy-alpha-D-glucose + H2O. Its pathway is carbohydrate biosynthesis; dTDP-L-rhamnose biosynthesis. It functions in the pathway bacterial outer membrane biogenesis; LPS O-antigen biosynthesis. Catalyzes the dehydration of dTDP-D-glucose to form dTDP-6-deoxy-D-xylo-4-hexulose via a three-step process involving oxidation, dehydration and reduction. The sequence is that of dTDP-glucose 4,6-dehydratase (rfbB1) from Neisseria meningitidis serogroup B (strain ATCC BAA-335 / MC58).